Consider the following 60-residue polypeptide: Colanic acid capsular biosynthesis activation protein B (60 aa).

This is Colanic acid capsular biosynthesis activation protein B (rcsB) from Klebsiella aerogenes (Enterobacter aerogenes).